We begin with the raw amino-acid sequence, 246 residues long: Exosome complex component Rrp41 (246 aa).

The protein belongs to the RNase PH family. Rrp41 subfamily. Component of the archaeal exosome complex. Forms a hexameric ring-like arrangement composed of 3 Rrp41-Rrp42 heterodimers. The hexameric ring associates with a trimer of Rrp4 and/or Csl4 subunits.

The protein resides in the cytoplasm. In terms of biological role, catalytic component of the exosome, which is a complex involved in RNA degradation. Has 3'-&gt;5' exoribonuclease activity. Can also synthesize heteromeric RNA-tails. The sequence is that of Exosome complex component Rrp41 from Pyrobaculum islandicum (strain DSM 4184 / JCM 9189 / GEO3).